Reading from the N-terminus, the 348-residue chain is tRNA N6-adenosine threonylcarbamoyltransferase (348 aa).

Residues His-111 and His-115 each contribute to the Fe cation site. Substrate is bound by residues 134 to 138, Asp-167, Gly-180, and Asn-277; that span reads LISGG. A Fe cation-binding site is contributed by Asp-305.

Belongs to the KAE1 / TsaD family. The cofactor is Fe(2+).

Its subcellular location is the cytoplasm. The enzyme catalyses L-threonylcarbamoyladenylate + adenosine(37) in tRNA = N(6)-L-threonylcarbamoyladenosine(37) in tRNA + AMP + H(+). Required for the formation of a threonylcarbamoyl group on adenosine at position 37 (t(6)A37) in tRNAs that read codons beginning with adenine. Is involved in the transfer of the threonylcarbamoyl moiety of threonylcarbamoyl-AMP (TC-AMP) to the N6 group of A37, together with TsaE and TsaB. TsaD likely plays a direct catalytic role in this reaction. This chain is tRNA N6-adenosine threonylcarbamoyltransferase, found in Haemophilus ducreyi (strain 35000HP / ATCC 700724).